Reading from the N-terminus, the 294-residue chain is ATP synthase gamma chain (294 aa).

The protein belongs to the ATPase gamma chain family. In terms of assembly, F-type ATPases have 2 components, CF(1) - the catalytic core - and CF(0) - the membrane proton channel. CF(1) has five subunits: alpha(3), beta(3), gamma(1), delta(1), epsilon(1). CF(0) has three main subunits: a, b and c.

It localises to the cell inner membrane. Functionally, produces ATP from ADP in the presence of a proton gradient across the membrane. The gamma chain is believed to be important in regulating ATPase activity and the flow of protons through the CF(0) complex. This Nitrosomonas eutropha (strain DSM 101675 / C91 / Nm57) protein is ATP synthase gamma chain.